A 184-amino-acid polypeptide reads, in one-letter code: ATP synthase subunit b, chloroplastic (184 aa).

Residues 27–49 (LATNPINLSVVLGVLIFFGKGVL) traverse the membrane as a helical segment.

Belongs to the ATPase B chain family. In terms of assembly, F-type ATPases have 2 components, F(1) - the catalytic core - and F(0) - the membrane proton channel. F(1) has five subunits: alpha(3), beta(3), gamma(1), delta(1), epsilon(1). F(0) has four main subunits: a(1), b(1), b'(1) and c(10-14). The alpha and beta chains form an alternating ring which encloses part of the gamma chain. F(1) is attached to F(0) by a central stalk formed by the gamma and epsilon chains, while a peripheral stalk is formed by the delta, b and b' chains.

It localises to the plastid. Its subcellular location is the chloroplast thylakoid membrane. Its function is as follows. F(1)F(0) ATP synthase produces ATP from ADP in the presence of a proton or sodium gradient. F-type ATPases consist of two structural domains, F(1) containing the extramembraneous catalytic core and F(0) containing the membrane proton channel, linked together by a central stalk and a peripheral stalk. During catalysis, ATP synthesis in the catalytic domain of F(1) is coupled via a rotary mechanism of the central stalk subunits to proton translocation. Component of the F(0) channel, it forms part of the peripheral stalk, linking F(1) to F(0). The protein is ATP synthase subunit b, chloroplastic of Eucalyptus globulus subsp. globulus (Tasmanian blue gum).